The primary structure comprises 397 residues: LIM/homeobox protein Lhx9 (397 aa).

2 LIM zinc-binding domains span residues 69 to 130 (ALCA…RFSV) and 131 to 193 (QRCA…LLQG). Disordered regions lie at residues 248 to 272 (ENEA…RMRT), 330 to 364 (ENGG…TLTD), and 378 to 397 (SNMD…TNLF). A DNA-binding region (homeobox) is located at residues 267–326 (TKRMRTSFKHHQLRTMKSYFAINHNPDAKDLKQLAQKTGLTKRVLQVWFQNARAKFRRNL). Residues 353–364 (LTPPGTATTLTD) are compositionally biased toward low complexity.

Interacts with LDB1 and LDB2.

Its subcellular location is the nucleus. Involved in gonadal development. This Homo sapiens (Human) protein is LIM/homeobox protein Lhx9 (LHX9).